We begin with the raw amino-acid sequence, 149 residues long: MGLFNFVKDAGEKLWDAVTGQHDKDDQAKKVQEHLNKTGIPDADKVNIQIADGKATVTGDGLSQEAKEKILVAVGNISGIASVDDQVKTATPATASQFYTVKSGDTLSAISKQVYGNANLYNKIFEANKPMLKSPDKIYPGQVLRIPEE.

The BON domain maps to 23–91; it reads DKDDQAKKVQ…SVDDQVKTAT (69 aa). The 50-residue stretch at 97 to 146 folds into the LysM domain; it reads QFYTVKSGDTLSAISKQVYGNANLYNKIFEANKPMLKSPDKIYPGQVLRI.

Its subcellular location is the cytoplasm. Highly specific potassium binding protein that is required for normal growth in the presence of high levels of external K(+). May act as a sensor of cytoplasmic K(+) concentration. This chain is Potassium binding protein Kbp, found in Escherichia coli O6:H1 (strain CFT073 / ATCC 700928 / UPEC).